The following is a 778-amino-acid chain: Ent-trachylobane synthase KSL2, chloroplastic (778 aa).

The N-terminal 37 residues, 1 to 37 (MLLTCTNSLKISSQAKEWESKTLTGMSLEQLNKRIRI), are a transit peptide targeting the chloroplast. 5 residues coordinate Mg(2+): aspartate 529, aspartate 533, asparagine 672, aspartate 673, and aspartate 680. The DDXXD motif motif lies at 529 to 533 (DDFFD).

The protein belongs to the terpene synthase family. Mg(2+) is required as a cofactor.

It localises to the plastid. The protein resides in the chloroplast. The enzyme catalyses ent-copalyl diphosphate = ent-trachylobane + diphosphate. The catalysed reaction is ent-copalyl diphosphate = ent-kaur-16-ene + diphosphate. It functions in the pathway secondary metabolite biosynthesis; terpenoid biosynthesis. In terms of biological role, diterpene cyclase involved in the biosynthesis of labdane-related diterpenoids (LRDs) natural products. Catalyzes the cyclization of ent-CDP into ent-trachylobane as a major and ent-kaurene as a minor product. This chain is Ent-trachylobane synthase KSL2, chloroplastic, found in Ricinus communis (Castor bean).